We begin with the raw amino-acid sequence, 171 residues long: CDP-archaeol synthase (171 aa).

A run of 5 helical transmembrane segments spans residues isoleucine 7–valine 27, glycine 54–proline 74, valine 84–isoleucine 104, proline 115–valine 135, and glycine 141–alanine 161.

It belongs to the CDP-archaeol synthase family. Mg(2+) serves as cofactor.

It localises to the cell membrane. It carries out the reaction 2,3-bis-O-(geranylgeranyl)-sn-glycerol 1-phosphate + CTP + H(+) = CDP-2,3-bis-O-(geranylgeranyl)-sn-glycerol + diphosphate. It participates in membrane lipid metabolism; glycerophospholipid metabolism. In terms of biological role, catalyzes the formation of CDP-2,3-bis-(O-geranylgeranyl)-sn-glycerol (CDP-archaeol) from 2,3-bis-(O-geranylgeranyl)-sn-glycerol 1-phosphate (DGGGP) and CTP. This reaction is the third ether-bond-formation step in the biosynthesis of archaeal membrane lipids. In Thermococcus kodakarensis (strain ATCC BAA-918 / JCM 12380 / KOD1) (Pyrococcus kodakaraensis (strain KOD1)), this protein is CDP-archaeol synthase.